Consider the following 483-residue polypeptide: MLLYNTLGRQKEEFTPLRPGKVHMYVCGITAYDYCHIGHARSALVFDVLVRQLRHMGLDVTFVRNFTDVDDKIINRANKEGLDWREVAQTYINAFYEDMDRLGVQRADVEPRATDHIQEIQDLCAKLVAEGKAYATTSGDVYFRVRSYPPYGKLSGRSLDELLSGARVAPGEEKEDPLDFALWKAAKPGEPSWESPWGPGRPGWHIECSAMSESYLPLDIHGGGQDLVFPHHENEIAQTEAVCHCHLARYWVHNGFVQVNAEKMSKSLGNFKTIRDILESYLPETLRFFLLGKHYRSPIDFTAEGMDEAEKALHRVYTALLETQKALTREKWKKSPLPAQLTEDWAAQAEALDEAMNDDLNTAQALGHIFTQVRLVNRLLEDKTLRAAEAGRDLLQDFLARAEQWNTRLGLFGQQPEAFLADLRRIRAARRNIDIPRVEALLQERQEARANKDFARSDALRQALLDLGVSVQDTPEGQNWDLE.

Cys27 provides a ligand contact to Zn(2+). The 'HIGH' region motif lies at 29 to 39; sequence ITAYDYCHIGH. Cys208, His231, and Glu235 together coordinate Zn(2+). The short motif at 263 to 267 is the 'KMSKS' region element; that stretch reads KMSKS. Lys266 provides a ligand contact to ATP.

This sequence belongs to the class-I aminoacyl-tRNA synthetase family. In terms of assembly, monomer. The cofactor is Zn(2+).

Its subcellular location is the cytoplasm. The catalysed reaction is tRNA(Cys) + L-cysteine + ATP = L-cysteinyl-tRNA(Cys) + AMP + diphosphate. The protein is Cysteine--tRNA ligase of Desulfovibrio desulfuricans (strain ATCC 27774 / DSM 6949 / MB).